The following is a 394-amino-acid chain: MGLLQEKLAKYDLPQKFMAQGVYPYFREIEGKQGTEVEMGGQHVLMFGSNAYTGLTGDERVIEAGIKAMRKYGSGCAGSRFLNGTLDLHVQLEKELAAFVGKDEALCFSTGFTVNSGVISCLTDRNDYIICDDRDHASIVDGRRLSFSQQLKYKHNDMADLEKQLQKCNPDSVKLIIVDGVFSMEGDLANLPEIVRLKHKYNATIMVDEAHGLGVFGKQGRGVCDHFGLTHEVDLIMGTFSKSLASIGGFIAADSSIINWLRHNARTYIFSASNTPAATAAALEALHIIQNEPERLNALWEATNYALRRFREAGFEIGATESPIIPLYVRDTEKTFMVTKLAFDEGVFINPVIPPACAPQDTLVRVALMATHTKEQIDSAVEKLVKAFKALDLL.

Residues glycine 111–phenylalanine 112, serine 183, histidine 211, and threonine 239 contribute to the pyridoxal 5'-phosphate site. Lysine 242 is modified (N6-(pyridoxal phosphate)lysine).

Belongs to the class-II pyridoxal-phosphate-dependent aminotransferase family. Pyridoxal 5'-phosphate is required as a cofactor.

It carries out the reaction L-serine + hexadecanoyl-CoA + H(+) = 3-oxosphinganine + CO2 + CoA. Its pathway is lipid metabolism; sphingolipid metabolism. Involved in de novo bacterial ceramide synthesis. Catalyzes the condensation of L-serine with palmitoyl-CoA (hexadecanoyl-CoA) to produce 3-oxosphinganine. Also capable of using alanine as substrate leading to the formation of 1-deoxysphinganine (1-deoxySa). Contributes to the levels of endogenous sphingolipids in its host. The polypeptide is Serine palmitoyltransferase (Bacteroides thetaiotaomicron (strain ATCC 29148 / DSM 2079 / JCM 5827 / CCUG 10774 / NCTC 10582 / VPI-5482 / E50)).